Consider the following 174-residue polypeptide: Alpha-crystallin B chain (174 aa).

Met1 is modified (N-acetylmethionine). Positions 55 to 163 (RMPSWLETGL…PERSIPITRE (109 aa)) constitute a sHSP domain. Residues His82, His103, Glu105, and His110 each coordinate Zn(2+). Residues 148-174 (RKQSDVPERSIPITREEKPAIAGSQRK) are disordered. Residues 149–166 (KQSDVPERSIPITREEKP) show a composition bias toward basic and acidic residues.

It belongs to the small heat shock protein (HSP20) family. As to quaternary structure, heteromer composed of three CRYAA and one CRYAB subunits. Aggregates with homologous proteins, including the small heat shock protein HSPB1, to form large heteromeric complexes. Inter-subunit bridging via zinc ions enhances stability, which is crucial as there is no protein turn over in the lens. In terms of tissue distribution, lens as well as other tissues.

Its function is as follows. May contribute to the transparency and refractive index of the lens. This is Alpha-crystallin B chain (CRYAB) from Gallus gallus (Chicken).